The following is a 1243-amino-acid chain: Serine/threonine-protein kinase/endoribonuclease IRE1 (1243 aa).

Positions 1-35 are cleaved as a signal peptide; it reads MMRRPPSQGRWSASHQKLLLAFAFILIPWLQLADA. Residues 36 to 585 lie on the Lumenal side of the membrane; the sequence is QQQPQQPQIR…VKALPQSAAN (550 aa). Disordered regions lie at residues 70–132 and 149–172; these read HAAP…KPNY and QPVR…GLAS. Residues 73–85 show a composition bias toward basic and acidic residues; sequence PDVHPEAKFDTVN. Polar residues predominate over residues 90–99; that stretch reads QQSTASPQQH. The span at 163-172 shows a compositional bias: low complexity; sequence SSSAASGLAS. Residues Asn-226, Asn-470, and Asn-554 are each glycosylated (N-linked (GlcNAc...) asparagine). A helical transmembrane segment spans residues 586–606; it reads SVIDFVSNPILIIFLIGSLIY. Over 607–1243 the chain is Cytoplasmic; that stretch reads NEKKLRRSYH…FREYYEPAGL (637 aa). The segment at 638-765 is disordered; sequence GDESGDDKDG…QSHENDPALT (128 aa). Residues 650 to 660 show a composition bias toward low complexity; sequence PSSPSPRSQPQ. Basic and acidic residues predominate over residues 674 to 693; sequence ERNAGDQDKVKDNRSLHDVS. Over residues 732–749 the composition is skewed to basic residues; the sequence is KKKKAHRGRRGGVKHRKG. The Protein kinase domain maps to 809-1105; it reads VDTDVELGMG…SREVMAHPFF (297 aa). ATP contacts are provided by residues 815 to 823 and Lys-837; that span reads LGMGSNGTV. Positions 819, 837, 881, and 883 each coordinate ADP. The active-site Proton acceptor is Asp-931. Mg(2+) is bound by residues Asn-936 and Asp-953. The region spanning 1108–1240 is the KEN domain; sequence PKKRLAFLCD…TDRFREYYEP (133 aa).

This sequence belongs to the protein kinase superfamily. Ser/Thr protein kinase family. Requires Mg(2+) as cofactor. Autophosphorylated mainly on serine residues; phosphorylation enables nucleotide binding by the active site.

It is found in the endoplasmic reticulum membrane. The enzyme catalyses L-seryl-[protein] + ATP = O-phospho-L-seryl-[protein] + ADP + H(+). It catalyses the reaction L-threonyl-[protein] + ATP = O-phospho-L-threonyl-[protein] + ADP + H(+). Functionally, senses unfolded proteins in the lumen of the endoplasmic reticulum via its N-terminal domain which leads to enzyme auto-activation. The active endoribonuclease domain splices precursor mRNAs to produce their mature form which then induces transcription of UPR target genes. The chain is Serine/threonine-protein kinase/endoribonuclease IRE1 from Hypocrea jecorina (strain QM6a) (Trichoderma reesei).